The chain runs to 453 residues: Elongation factor 1-alpha (453 aa).

Positions 5-230 (KTHINIVVIG…DAIVEPKRPH (226 aa)) constitute a tr-type G domain. The G1 stretch occupies residues 14-21 (GHVDAGKS). Position 14–21 (14–21 (GHVDAGKS)) interacts with GTP. The segment at 70–74 (GITID) is G2. The tract at residues 91–94 (DAPG) is G3. Residues 91–95 (DAPGH) and 153–156 (NKMD) each bind GTP. A G4 region spans residues 153–156 (NKMD). The G5 stretch occupies residues 194-196 (SGW).

This sequence belongs to the TRAFAC class translation factor GTPase superfamily. Classic translation factor GTPase family. EF-Tu/EF-1A subfamily. In terms of assembly, binds to actin.

It is found in the cytoplasm. This protein promotes the GTP-dependent binding of aminoacyl-tRNA to the A-site of ribosomes during protein biosynthesis. It is also an abundant actin filament bundling protein. In Dictyostelium discoideum (Social amoeba), this protein is Elongation factor 1-alpha (eef1a2).